The chain runs to 416 residues: Dihydrolipoyllysine-residue succinyltransferase component of 2-oxoglutarate dehydrogenase complex (416 aa).

The Lipoyl-binding domain occupies 3 to 78 (IVDVKVPQLS…VADEIIAKID (76 aa)). An N6-lipoyllysine modification is found at Lys44. In terms of domain architecture, Peripheral subunit-binding (PSBD) spans 115-152 (VAMPSAAKLMAEAGLSAGQVAGTGKDGRITKGDALAAA). Active-site residues include His387 and Asp391.

Belongs to the 2-oxoacid dehydrogenase family. Forms a 24-polypeptide structural core with octahedral symmetry. Part of the 2-oxoglutarate dehydrogenase (OGDH) complex composed of E1 (2-oxoglutarate dehydrogenase), E2 (dihydrolipoamide succinyltransferase) and E3 (dihydrolipoamide dehydrogenase); the complex contains multiple copies of the three enzymatic components (E1, E2 and E3). (R)-lipoate serves as cofactor.

The enzyme catalyses N(6)-[(R)-dihydrolipoyl]-L-lysyl-[protein] + succinyl-CoA = N(6)-[(R)-S(8)-succinyldihydrolipoyl]-L-lysyl-[protein] + CoA. It functions in the pathway amino-acid degradation; L-lysine degradation via saccharopine pathway; glutaryl-CoA from L-lysine: step 6/6. E2 component of the 2-oxoglutarate dehydrogenase (OGDH) complex which catalyzes the second step in the conversion of 2-oxoglutarate to succinyl-CoA and CO(2). This Cupriavidus necator (strain ATCC 17699 / DSM 428 / KCTC 22496 / NCIMB 10442 / H16 / Stanier 337) (Ralstonia eutropha) protein is Dihydrolipoyllysine-residue succinyltransferase component of 2-oxoglutarate dehydrogenase complex (sucB).